A 681-amino-acid chain; its full sequence is T-box-containing protein 2 (681 aa).

The T-box DNA-binding region spans 149-323 (LWDQFSRAGT…NNPFAKGFRE (175 aa)). Disordered regions lie at residues 316–351 (PFAK…EQRR), 456–489 (GITS…NQSN), 521–558 (PNIN…LIPG), and 589–611 (ESGE…CQSG). Residues 470-489 (NSFTYYNSSSPSSSDSNQSN) show a composition bias toward low complexity. Residues 521-534 (PNINIPNTVETNVH) are compositionally biased toward polar residues.

In terms of assembly, monomer. In terms of tissue distribution, differentiating muscle and tailbud tip.

The protein localises to the nucleus. Involved in the transcriptional regulation of genes required for muscle differentiation. Binds to a palindromic site (called T site) and activates gene transcription when bound to such a site. This Halocynthia roretzi (Sea squirt) protein is T-box-containing protein 2 (T2).